The following is a 32-amino-acid chain: Hainantoxin F8-35.23 (32 aa).

Expressed by the venom gland.

It localises to the secreted. This Cyriopagopus hainanus (Chinese bird spider) protein is Hainantoxin F8-35.23.